Here is a 376-residue protein sequence, read N- to C-terminus: Glucose-1-phosphate adenylyltransferase (376 aa).

Residues Tyr-101, Gly-166, 181-182, and Ser-192 contribute to the alpha-D-glucose 1-phosphate site; that span reads EK.

This sequence belongs to the bacterial/plant glucose-1-phosphate adenylyltransferase family. Homotetramer.

It carries out the reaction alpha-D-glucose 1-phosphate + ATP + H(+) = ADP-alpha-D-glucose + diphosphate. The protein operates within glycan biosynthesis; glycogen biosynthesis. Functionally, involved in the biosynthesis of ADP-glucose, a building block required for the elongation reactions to produce glycogen. Catalyzes the reaction between ATP and alpha-D-glucose 1-phosphate (G1P) to produce pyrophosphate and ADP-Glc. This Bacillus cereus (strain ATCC 14579 / DSM 31 / CCUG 7414 / JCM 2152 / NBRC 15305 / NCIMB 9373 / NCTC 2599 / NRRL B-3711) protein is Glucose-1-phosphate adenylyltransferase.